A 338-amino-acid chain; its full sequence is MAGSHPYFNQPDSTHPSPPSAPPSLHWYQRCQPSDATSGLLVALLGGGLPAGFVGPLSRMAYQASNLPSLELLIWRCLFHLPIALLLKLRGDPLLGPPDIRSRAFFCALLNILSIGCAYSAVQVVPAGNAATVRKGSSTVCSAVLTLCLESQGLSGYDWCGLLGCILGLIIIVGPGLWTLQEGTTGVYTALGYAEAFLGGRALSLGLLVYRSLHFPSCLPTVAFLSGLVGLLGSVPGLFVLQTPVLPSDLLSWSCVGAVGILALVSFTCVGYAVTKAHPALVCAVLHSEVVVALILQYYMLHETVAPSDIMGAGVALGSIAIITARNLSCERTGKVEE.

The disordered stretch occupies residues Met1–Ser24. 9 helical membrane-spanning segments follow: residues Thr37–Leu57, Leu67–Leu87, Phe105–Val125, Cys160–Leu180, Ala190–Tyr210, Thr221–Leu241, Leu250–Val270, Leu281–Leu301, and Val305–Ala325. The EamA 1 domain maps to Leu49–Gly174. Positions Tyr272–Ala325 constitute an EamA 2 domain.

The protein belongs to the SLC35G solute transporter family.

The protein resides in the membrane. The sequence is that of Solute carrier family 35 member G3 (SLC35G3) from Pan paniscus (Pygmy chimpanzee).